The sequence spans 380 residues: NF-kappa-B inhibitor-like protein 1 (380 aa).

The tract at residues 1-34 (MSNPSPQVPEGEASTSVCRPKSSMASTSRRQRRE) is disordered. The segment covering 13–28 (ASTSVCRPKSSMASTS) has biased composition (polar residues). ANK repeat units lie at residues 64 to 93 (GQPPPLHRACARHDAPALCLLLRLGADPAH) and 97 to 133 (HGDTALHAAARQGPDAYTDFFLPLLSRCPSAMGIKNK). Disordered stretches follow at residues 131–167 (KNKDGETPGQILGWGPPWDSAEEEEEDEASKEREWRQ) and 185–293 (EDDA…RGSL). A Phosphoserine modification is found at Ser150. The segment covering 150–159 (SAEEEEEDEA) has biased composition (acidic residues). Composition is skewed to basic and acidic residues over residues 204-221 (RMAREHAQKRQQQRETEG) and 236-272 (RQQEEEQRLFRERARAKEEELRESQARRAQEAPRDPV).

Interacts with CACTIN (via N-terminal domain); the interaction occurs in a pro-inflammatory-independent manner.

Its subcellular location is the nucleus. Functionally, involved in the regulation of innate immune response. Acts as negative regulator of Toll-like receptor and interferon-regulatory factor (IRF) signaling pathways. Contributes to the negative regulation of transcriptional activation of NF-kappa-B target genes in response to endogenous pro-inflammatory stimuli. This chain is NF-kappa-B inhibitor-like protein 1 (NFKBIL1), found in Sus scrofa (Pig).